The following is a 483-amino-acid chain: Glutamyl-tRNA(Gln) amidotransferase subunit A (483 aa).

Active-site charge relay system residues include Lys76 and Ser151. Ser175 functions as the Acyl-ester intermediate in the catalytic mechanism.

Belongs to the amidase family. GatA subfamily. In terms of assembly, heterotrimer of A, B and C subunits.

It catalyses the reaction L-glutamyl-tRNA(Gln) + L-glutamine + ATP + H2O = L-glutaminyl-tRNA(Gln) + L-glutamate + ADP + phosphate + H(+). Its function is as follows. Allows the formation of correctly charged Gln-tRNA(Gln) through the transamidation of misacylated Glu-tRNA(Gln) in organisms which lack glutaminyl-tRNA synthetase. The reaction takes place in the presence of glutamine and ATP through an activated gamma-phospho-Glu-tRNA(Gln). The chain is Glutamyl-tRNA(Gln) amidotransferase subunit A from Pseudomonas savastanoi pv. phaseolicola (strain 1448A / Race 6) (Pseudomonas syringae pv. phaseolicola (strain 1448A / Race 6)).